Consider the following 173-residue polypeptide: MPRSMKNDNFIDKTFTVMADLILKLMPGVSPEQKKAFAYYRDGMAAQSEGEYAEALENYREALALEQDDEDRSYILYNMGLIYQSNGELDKALEYYHQALELNPRLCSALNNIAVLLHHKGEQSLQAGDEETAEALFDEAAQYWIRAIRIAPNNYIEAQNWLKTTGRANLELY.

TPR repeat units lie at residues 36–69, 73–106, and 121–154; these read AFAYYRDGMAAQSEGEYAEALENYREALALEQDD, SYILYNMGLIYQSNGELDKALEYYHQALELNPRL, and GEQSLQAGDEETAEALFDEAAQYWIRAIRIAPNN.

The protein belongs to the Ycf3 family.

The protein resides in the cellular thylakoid membrane. Its function is as follows. Essential for the assembly of the photosystem I (PSI) complex. May act as a chaperone-like factor to guide the assembly of the PSI subunits. This chain is Photosystem I assembly protein Ycf3, found in Synechococcus sp. (strain JA-3-3Ab) (Cyanobacteria bacterium Yellowstone A-Prime).